A 112-amino-acid chain; its full sequence is UPF0342 protein SPT_0901 (112 aa).

This sequence belongs to the UPF0342 family.

The polypeptide is UPF0342 protein SPT_0901 (Streptococcus pneumoniae (strain Taiwan19F-14)).